Here is a 171-residue protein sequence, read N- to C-terminus: Phosphopantetheine adenylyltransferase (171 aa).

Thr10 is a substrate binding site. ATP-binding positions include 10-11 and His18; that span reads TF. Substrate-binding residues include Lys42, Thr74, and Arg88. Residues 89–91, Glu99, and 124–130 each bind ATP; these read GLR and WACLSSK.

Belongs to the bacterial CoaD family. As to quaternary structure, homohexamer. Requires Mg(2+) as cofactor.

It is found in the cytoplasm. The catalysed reaction is (R)-4'-phosphopantetheine + ATP + H(+) = 3'-dephospho-CoA + diphosphate. The protein operates within cofactor biosynthesis; coenzyme A biosynthesis; CoA from (R)-pantothenate: step 4/5. Functionally, reversibly transfers an adenylyl group from ATP to 4'-phosphopantetheine, yielding dephospho-CoA (dPCoA) and pyrophosphate. This Blochmanniella pennsylvanica (strain BPEN) protein is Phosphopantetheine adenylyltransferase.